Here is a 352-residue protein sequence, read N- to C-terminus: Histidinol-phosphate aminotransferase (352 aa).

N6-(pyridoxal phosphate)lysine is present on Lys-221.

It belongs to the class-II pyridoxal-phosphate-dependent aminotransferase family. Histidinol-phosphate aminotransferase subfamily. Homodimer. The cofactor is pyridoxal 5'-phosphate.

It carries out the reaction L-histidinol phosphate + 2-oxoglutarate = 3-(imidazol-4-yl)-2-oxopropyl phosphate + L-glutamate. It functions in the pathway amino-acid biosynthesis; L-histidine biosynthesis; L-histidine from 5-phospho-alpha-D-ribose 1-diphosphate: step 7/9. The polypeptide is Histidinol-phosphate aminotransferase (Staphylococcus aureus (strain MRSA252)).